The following is a 282-amino-acid chain: 2-dehydro-3-deoxyphosphooctonate aldolase (282 aa).

This sequence belongs to the KdsA family.

It localises to the cytoplasm. The enzyme catalyses D-arabinose 5-phosphate + phosphoenolpyruvate + H2O = 3-deoxy-alpha-D-manno-2-octulosonate-8-phosphate + phosphate. The protein operates within carbohydrate biosynthesis; 3-deoxy-D-manno-octulosonate biosynthesis; 3-deoxy-D-manno-octulosonate from D-ribulose 5-phosphate: step 2/3. It participates in bacterial outer membrane biogenesis; lipopolysaccharide biosynthesis. The protein is 2-dehydro-3-deoxyphosphooctonate aldolase of Shewanella baltica (strain OS185).